The primary structure comprises 491 residues: Lysine--tRNA ligase (491 aa).

Residues glutamate 399 and glutamate 406 each contribute to the Mg(2+) site.

This sequence belongs to the class-II aminoacyl-tRNA synthetase family. Homodimer. Requires Mg(2+) as cofactor.

The protein resides in the cytoplasm. It carries out the reaction tRNA(Lys) + L-lysine + ATP = L-lysyl-tRNA(Lys) + AMP + diphosphate. The protein is Lysine--tRNA ligase of Chloroflexus aurantiacus (strain ATCC 29366 / DSM 635 / J-10-fl).